A 367-amino-acid chain; its full sequence is Germination protease (367 aa).

Residues 1-15 (MKEPLDLSKYSVRTD) constitute a propeptide that is removed on maturation.

It belongs to the peptidase A25 family. In terms of assembly, homotetramer. In terms of processing, autoproteolytically processed. The inactive tetrameric zymogen termed p46 autoprocesses to a smaller form termed p41, which is active only during spore germination.

It carries out the reaction Endopeptidase action with P4 Glu or Asp, P1 preferably Glu &gt; Asp, P1' hydrophobic and P2' Ala.. Initiates the rapid degradation of small, acid-soluble proteins during spore germination. This chain is Germination protease, found in Bacillus mycoides (strain KBAB4) (Bacillus weihenstephanensis).